We begin with the raw amino-acid sequence, 137 residues long: Large-conductance mechanosensitive channel (137 aa).

Transmembrane regions (helical) follow at residues 10–30 (FAMR…AAFG) and 76–96 (GVFL…FMAI).

This sequence belongs to the MscL family. In terms of assembly, homopentamer.

Its subcellular location is the cell inner membrane. Its function is as follows. Channel that opens in response to stretch forces in the membrane lipid bilayer. May participate in the regulation of osmotic pressure changes within the cell. The protein is Large-conductance mechanosensitive channel of Erwinia tasmaniensis (strain DSM 17950 / CFBP 7177 / CIP 109463 / NCPPB 4357 / Et1/99).